The sequence spans 988 residues: Band 4.1-like protein 2 (988 aa).

The disordered stretch occupies residues 1 to 190 (MTTEVGSASE…GAAKRETKEV (190 aa)). T2 is subject to N-acetylthreonine. S7 is modified (phosphoserine). The span at 22–31 (ASKEKAKEVE) shows a compositional bias: basic and acidic residues. Phosphoserine occurs at positions 38, 86, and 116. Composition is skewed to basic and acidic residues over residues 110 to 148 (ILGK…EAKP) and 160 to 190 (EEVR…TKEV). Phosphoserine occurs at positions 201, 379, 395, 492, 543, 555, 561, and 582. Residues 211-492 (VLAKVTLLDG…EHHTFYRLVS (282 aa)) enclose the FERM domain. The tract at residues 495 to 651 (QPPKTKFLTL…TPEPRPSEWE (157 aa)) is hydrophilic. A disordered region spans residues 514–594 (TQAQTREAST…KATPLPAEGK (81 aa)). Over residues 555 to 567 (SPPGEGSVPGPGV) the composition is skewed to low complexity. At Y606 the chain carries Phosphotyrosine. Residues S610 and S630 each carry the phosphoserine modification. Disordered stretches follow at residues 639-788 (MAST…QAGA) and 804-839 (QKLP…VPHL). A spectrin--actin-binding region spans residues 652–837 (KRRVTPLPFQ…DPHRVNGEVP (186 aa)). Residues 673 to 686 (VEEKKRAEVGKDES) show a composition bias toward basic and acidic residues. Residue S698 is modified to Phosphoserine. Basic and acidic residues predominate over residues 704–717 (GETRKVEPVAHKDS). Residues 718 to 729 (TSLSSESSSSSS) show a composition bias toward low complexity. The segment covering 739-751 (QPHHRVTEGTIRE) has biased composition (basic and acidic residues). T745 is modified (phosphothreonine). Residues 752–764 (EQEECDEELEEEP) are compositionally biased toward acidic residues. Residues 828–839 (DPHRVNGEVPHL) are compositionally biased toward basic and acidic residues. The interval 838-988 (HLDLDGLPEI…ETELAEEGEE (151 aa)) is C-terminal (CTD).

Interacts with FCGR1A. Interacts with TRPC4. Interacts (via CTD domain) with FKBP2. Interacts with NUMA1; this interaction is negatively regulated by CDK1 during metaphase and promotes anaphase-specific localization of NUMA1 in symmetrically dividing cells. As to expression, widely expressed.

The protein resides in the cytoplasm. It is found in the cytoskeleton. It localises to the cell cortex. Its subcellular location is the cell membrane. Its function is as follows. Required for dynein-dynactin complex and NUMA1 recruitment at the mitotic cell cortex during anaphase. The chain is Band 4.1-like protein 2 from Mus musculus (Mouse).